Reading from the N-terminus, the 551-residue chain is Solute carrier family 22 member 6 (551 aa).

Residues 1-9 (MAFNDLLKQ) lie on the Cytoplasmic side of the membrane. A helical membrane pass occupies residues 10–30 (VGGVGRFQLIQVTMVVAPLLL). At 31-135 (MASHNTLQNF…LVCSHRAFRQ (105 aa)) the chain is on the extracellular side. 4 N-linked (GlcNAc...) asparagine glycosylation sites follow: N39, N56, N92, and N113. A helical membrane pass occupies residues 136 to 156 (LAQSLYMVGVLLGAMVFGYLA). Residues 157–164 (DRLGRRKV) are Cytoplasmic-facing. A helical transmembrane segment spans residues 165–187 (LILNYLQTAVSGTCAAYAPNYTV). Residues 188 to 195 (YCVFRLLS) lie on the Extracellular side of the membrane. The helical transmembrane segment at 196–216 (GMSLASIAINCMTLNVEWMPI) threads the bilayer. The Cytoplasmic portion of the chain corresponds to 217 to 224 (HTRAYVGT). The helical transmembrane segment at 225–245 (LIGYVYSLGQFLLAGIAYAVP) threads the bilayer. The Extracellular segment spans residues 246–248 (HWR). Residues 249 to 269 (HLQLVVSVPFFIAFIYSWFFI) traverse the membrane as a helical segment. Residues 270-337 (ESARWYSSSG…ELLRCPTLRH (68 aa)) are Cytoplasmic-facing. A helical membrane pass occupies residues 338 to 358 (LFLCLSMLWFATSFAYYGLVM). Residues 359-368 (DLQGFGVSMY) are Extracellular-facing. Residues 369 to 389 (LIQVIFGAVDLPAKFVCFLVI) traverse the membrane as a helical segment. Residues 390–395 (NSMGRR) are Cytoplasmic-facing. A helical membrane pass occupies residues 396-416 (PAQMASLLLAGICILVNGIIP). The Extracellular segment spans residues 417-425 (KSHTIIRTS). Residues 426–446 (LAVLGKGCLASSFNCIFLYTG) traverse the membrane as a helical segment. The Cytoplasmic segment spans residues 447-484 (ELYPTVIRQTGLGMGSTMARVGSIVSPLVSMTAEFYPS). The chain crosses the membrane as a helical span at residues 485–505 (MPLFIFGAVPVVASAVTALLP). Over 506 to 551 (ETLGQPLPDTVQDLKSRSRGKQNQQQQEQQKQMMPLQASTQEKNGL) the chain is Extracellular. Positions 514 to 551 (DTVQDLKSRSRGKQNQQQQEQQKQMMPLQASTQEKNGL) are disordered. Residues 526-537 (KQNQQQQEQQKQ) are compositionally biased toward low complexity. Over residues 542 to 551 (QASTQEKNGL) the composition is skewed to polar residues.

It belongs to the major facilitator (TC 2.A.1) superfamily. Organic cation transporter (TC 2.A.1.19) family. Post-translationally, glycosylated. Glycosylation is necessary for proper targeting of the transporter to the plasma membrane. As to expression, highly expressed in kidney; in the particular segment of the proximal tubule. In kidney, found preferentially in the cortex and outer medulla and weakly in the inner medulla. Expressed to a lower extent in brain.

Its subcellular location is the cell membrane. The protein localises to the basolateral cell membrane. The protein resides in the basal cell membrane. It catalyses the reaction (6R)-L-erythro-5,6,7,8-tetrahydrobiopterin(out) + a dicarboxylate(in) = (6R)-L-erythro-5,6,7,8-tetrahydrobiopterin(in) + a dicarboxylate(out). The enzyme catalyses L-erythro-7,8-dihydrobiopterin(out) + a dicarboxylate(in) = L-erythro-7,8-dihydrobiopterin(in) + a dicarboxylate(out). The catalysed reaction is L-sepiapterin(out) + a dicarboxylate(in) = L-sepiapterin(in) + a dicarboxylate(out). It carries out the reaction prostaglandin F2alpha(out) + a dicarboxylate(in) = prostaglandin F2alpha(in) + a dicarboxylate(out). It catalyses the reaction prostaglandin E2(out) + a dicarboxylate(in) = prostaglandin E2(in) + a dicarboxylate(out). The enzyme catalyses 3',5'-cyclic AMP(out) + a dicarboxylate(in) = 3',5'-cyclic AMP(in) + a dicarboxylate(out). The catalysed reaction is 3',5'-cyclic GMP(out) + a dicarboxylate(in) = 3',5'-cyclic GMP(in) + a dicarboxylate(out). It carries out the reaction urate(out) + a dicarboxylate(in) = urate(in) + a dicarboxylate(out). It catalyses the reaction kynurenate(out) + glutarate(in) = kynurenate(in) + glutarate(out). The enzyme catalyses (indol-3-yl)acetate(out) + a dicarboxylate(in) = (indol-3-yl)acetate(in) + a dicarboxylate(out). The catalysed reaction is indoxyl sulfate(out) + a dicarboxylate(in) = indoxyl sulfate(in) + a dicarboxylate(out). It carries out the reaction N-benzoylglycine(out) + a dicarboxylate(in) = N-benzoylglycine(in) + a dicarboxylate(out). It catalyses the reaction 3-carboxy-4-methyl-5-propyl-2-furanpropanoate(out) + a dicarboxylate(in) = 3-carboxy-4-methyl-5-propyl-2-furanpropanoate(in) + a dicarboxylate(out). Secondary active transporter that functions as a Na(+)-independent organic anion (OA)/dicarboxylate antiporter where the uptake of one molecule of OA into the cell is coupled with an efflux of one molecule of intracellular dicarboxylate such as alpha-ketoglutarate or glutarate. Mediates the uptake of OA across the basolateral side of proximal tubule epithelial cells, thereby contributing to the renal elimination of endogenous OA from the systemic circulation into the urine. Function as a biopterin transporters involved in the uptake and the secretion of coenzymes tetrahydrobiopterin (BH4) dihydrobiopterin (BH2) and sepiapterin to urine, thereby determining baseline levels of blood biopterins. Transports prostaglandin E2 (PGE2) and prostaglandin F2-alpha (PGF2-alpha) and may contribute to their renal excretion. Also mediates the uptake of cyclic nucleotides such as cAMP and cGMP. Involved in the transport of neuroactive tryptophan metabolites kynurenate (KYNA) and xanthurenate (XA) and may contribute to their secretion from the brain. May transport glutamate. Also involved in the disposition of uremic toxins and potentially toxic xenobiotics by the renal organic anion secretory pathway, helping reduce their undesired toxicological effects on the body. Uremic toxins include the indoxyl sulfate (IS), hippurate, indole acetate (IA), 3-carboxy-4- methyl-5-propyl-2-furanpropionate(CMPF) and urate. Xenobiotics include the mycotoxin ochratoxin (OTA). May also contribute to the transport of organic compounds in testes across the blood-testis-barrier. May also work as a bidirectional OA/dicarboxylate exchanger. This is Solute carrier family 22 member 6 from Rattus norvegicus (Rat).